The primary structure comprises 371 residues: Cytochrome b (371 aa).

The next 4 helical transmembrane spans lie at Phe25–Val45, Trp69–Ile90, Trp105–Leu125, and Phe170–Ile190. Heme b is bound by residues His75 and His89. Residues His174 and His188 each contribute to the heme b site. A ubiquinone is bound at residue His193. A run of 4 helical transmembrane segments spans residues Tyr218–Phe238, Leu280–His300, Leu312–Thr332, and Tyr339–Pro358.

It belongs to the cytochrome b family. The cytochrome bc1 complex contains 3 respiratory subunits (MT-CYB, CYC1 and UQCRFS1), 2 core proteins (UQCRC1 and UQCRC2) and probably 6 low-molecular weight proteins. It depends on heme b as a cofactor.

Its subcellular location is the mitochondrion inner membrane. Functionally, component of the ubiquinol-cytochrome c reductase complex (complex III or cytochrome b-c1 complex) that is part of the mitochondrial respiratory chain. The b-c1 complex mediates electron transfer from ubiquinol to cytochrome c. Contributes to the generation of a proton gradient across the mitochondrial membrane that is then used for ATP synthesis. The sequence is that of Cytochrome b (MT-CYB) from Simalia amethistina (Amethystine python).